The following is a 1912-amino-acid chain: Protein javelin (1912 aa).

10 disordered regions span residues 1–32 (MGNGYFRTSQTSSSSRQREKRGKDSYSYQHNY), 89–145 (GTGL…VGGA), 298–377 (RSRH…HRLS), 460–515 (QSRR…SLSE), 545–586 (TTRT…TLRQ), 764–920 (SYNQ…EAPV), 965–1010 (IQEN…GKPL), 1257–1297 (GINS…GGAA), 1486–1507 (EQQENGEHLEEEDDEQDDQYED), and 1881–1912 (YDPSKEPPPQVEEGTDKIPTDAELYDSLDDKM). Basic residues-rich tracts occupy residues 97–133 (QQLHHHHSNQVNQHHHQQQQSHHHLQHANLHSHHPHA) and 299–313 (SRHKFQFKQFKKKPP). Positions 339 to 354 (ADDTQSQRSNSATCDS) are enriched in polar residues. A compositionally biased stretch (low complexity) spans 355–374 (HQQQQQQQHQPQQQHQQQQH). Over residues 489-498 (EHSQSSVFPE) the composition is skewed to polar residues. Over residues 499-512 (TTTSNSDDQTDSPS) the composition is skewed to low complexity. The segment covering 553-566 (SEEGEEEQTGEEVV) has biased composition (acidic residues). A compositionally biased stretch (polar residues) spans 568–586 (SLTTPTEPQTSDSESTLRQ). 2 stretches are compositionally biased toward basic and acidic residues: residues 772-792 (QRKEAKKEQQVTRAETYDSIR) and 802-869 (RQRE…RKEE). Acidic residues predominate over residues 890–904 (SQQEDTVADVEEEDN). The span at 965–979 (IQENKETSQRIEPKP) shows a compositional bias: basic and acidic residues. Residues 981–990 (PKTNSNSSST) are compositionally biased toward low complexity. Composition is skewed to acidic residues over residues 1494–1507 (LEEEDDEQDDQYED) and 1903–1912 (ELYDSLDDKM).

The protein localises to the cytoplasm. It is found in the cytoskeleton. Functionally, important for normal assembly of actin bundles during bristle formation. The polypeptide is Protein javelin (Drosophila melanogaster (Fruit fly)).